The following is a 170-amino-acid chain: MTFFGPKVLLLLTALIMSSGRTPLGVSGQRGDDVTTVTSETFTEDPNLVNDPATDETVLADIQPSTDDLASLNDKNTTTECRDEKFACTRLYSVHRPIKQCLHQICFTSSRRMYVINNEICSRLVCKEHEAMKDELCRQKAGLPPRRLRRSNYFRLPPCDNVNLQGPSGL.

Residues 1-20 (MTFFGPKVLLLLTALIMSSG) form the signal peptide. Residues 30-32 (RGD) carry the Cell attachment site motif. An N-linked (GlcNAc...) asparagine glycan is attached at asparagine 76.

This sequence belongs to the MFAP family. Interacts with TGFB2. Interacts with BMP2. Interacts with FBN1 (via N-terminal domain) and FBN2. Post-translationally, forms intermolecular disulfide bonds either with other MAGP-2 molecules or with other components of the microfibrils. Associated with fibrillin-containing microfibrils of the developing nuchal ligament.

It localises to the secreted. It is found in the extracellular space. The protein resides in the extracellular matrix. May play a role in hematopoiesis. In the cardiovascular system, could regulate growth factors or participate in cell signaling in maintaining large vessel integrity. Component of the elastin-associated microfibrils. In Bos taurus (Bovine), this protein is Microfibrillar-associated protein 5 (MFAP5).